Consider the following 301-residue polypeptide: MSDLEEVVEEYEEEQEAEEAAAEEEDWREDEDEQEAGEEEEAGGGREAEAETEETQAEEDGQEEEDKEDEDGPVEESKPKPRPFMPNLVPPKIPDGERVDFDDIHRKRMEKDLNELQTLIEAHFENRKKEEEELVSLKDRIEKRRADAEQLRIRAEREKERQNRLAEERARREEEESRRKAEDEARKKKALSNMMHFGGYIQKQAQTERKSGKRQTEREKKKKILAERRKVLAIDHLNEDQLREKAKELWQSIYNLEAEKFDLQEKFKQQKYEINVLRNRINDNQKVSKTRGKAKVTGRWK.

2 stretches are compositionally biased toward acidic residues: residues 1–42 and 50–74; these read MSDL…EEEA and AETEETQAEEDGQEEEDKEDEDGPV. 2 disordered regions span residues 1 to 99 and 125 to 223; these read MSDL…GERV and ENRK…KKKK. Ser2 is modified (N-acetylserine). Position 2 is a phosphoserine; by CK2 (Ser2). Over residues 82–93 the composition is skewed to pro residues; it reads RPFMPNLVPPKI. Basic and acidic residues-rich tracts occupy residues 125–186 and 206–223; these read ENRK…DEAR and QTERKSGKRQTEREKKKK. Thr207 is modified (phosphothreonine; by PKC/PRKCA). Phosphoserine; by PKC/PRKCA is present on Ser211. Thr216 carries the post-translational modification Phosphothreonine; by PKC/PRKCA and RAF1. Thr297 is modified (phosphothreonine; by PKC/PRKCA).

Belongs to the troponin T family. Binds with troponins I and C to make the thin-filament regulatory complex, troponin. Post-translationally, phosphorylation at Thr-216 by PRKCA induces significant reduction in myofilament calcium sensitivity and actomyosin ATPase activity. In terms of tissue distribution, the major isoform in adult heart is CTNT4.

Functionally, troponin T is the tropomyosin-binding subunit of troponin, the thin filament regulatory complex which confers calcium-sensitivity to striated muscle actomyosin ATPase activity. The protein is Troponin T, cardiac muscle (TNNT2) of Oryctolagus cuniculus (Rabbit).